Here is a 635-residue protein sequence, read N- to C-terminus: Biosynthetic arginine decarboxylase (635 aa).

K101 is subject to N6-(pyridoxal phosphate)lysine. 284 to 294 (VDVGGGLGVDY) is a substrate binding site.

This sequence belongs to the Orn/Lys/Arg decarboxylase class-II family. SpeA subfamily. Requires Mg(2+) as cofactor. The cofactor is pyridoxal 5'-phosphate.

It catalyses the reaction L-arginine + H(+) = agmatine + CO2. Its pathway is amine and polyamine biosynthesis; agmatine biosynthesis; agmatine from L-arginine: step 1/1. In terms of biological role, catalyzes the biosynthesis of agmatine from arginine. The protein is Biosynthetic arginine decarboxylase of Tolumonas auensis (strain DSM 9187 / NBRC 110442 / TA 4).